The sequence spans 1051 residues: Leucine zipper protein 1 (1051 aa).

Ala2 carries the N-acetylalanine modification. A coiled-coil region spans residues 11 to 354; sequence ASNRHLRFKL…KLQVKKQKEL (344 aa). 4 disordered regions span residues 247-293, 374-401, 432-554, and 569-601; these read ISST…KDLN, RTKL…HKRE, AAKA…SQVT, and ASSQ…SKAP. Positions 254–293 are enriched in basic and acidic residues; that stretch reads KESRRKGSLDYLKQVENETRDKSENEKNRNQEDNKVKDLN. Ser256, Ser261, Ser395, Ser513, Ser571, Ser575, Ser612, and Ser660 each carry phosphoserine. The span at 569–578 shows a compositional bias: polar residues; the sequence is ASSQRASSEG. The tract at residues 675–727 is disordered; that stretch reads VNTTITPEPEPKLQPNSREKVKSRGGTRTPLFENDKNAAVENDSAKSMRSSSN. Thr680 carries the phosphothreonine modification. Ser691 bears the Phosphoserine mark. Positions 707–720 are enriched in basic and acidic residues; that stretch reads ENDKNAAVENDSAK. Ser746 is subject to Phosphoserine. Residues 789–799 are compositionally biased toward low complexity; that stretch reads VTSKVTSSITI. The interval 789–837 is disordered; that stretch reads VTSKVTSSITIYPSDSSGPRAVPTEAPRERHTSTSNIQVGPPELTSVSN. Positions 834 to 884 are required for interaction with FLNA; it reads SVSNHISSPLELSIHKHDITLQLTEAERVGDGSPKNRAETVVSRSSILIKP. Ser906 carries the post-translational modification Phosphoserine. A compositionally biased stretch (basic and acidic residues) spans 929-938; the sequence is RDLKCSEDPP. Residues 929–1000 form a disordered region; it reads RDLKCSEDPP…TQSSLTASEV (72 aa). Composition is skewed to polar residues over residues 946–958 and 989–999; these read EATN…SSTD and RRTQSSLTASE. Thr957 is modified (phosphothreonine). The residue at position 993 (Ser993) is a Phosphoserine.

In terms of assembly, component of the CERF-1 ISWI chromatin remodeling complex (also called the CECR2-containing remodeling factor (CERF) complex) at least composed of CECR2 and SMARCA1. Component of the CERF-5 ISWI chromatin remodeling complex at least composed of CECR2 and SMARCA5/SNF2H. LUZP1 is detected as part of the CERF-1 and CERF-5 complexes in embryonic stem (ES) cells where it is involved in complex stabilization but is not detected in the complexes in the testis. Interacts (via C-terminus) with LIMA1/EPLIN; both proteins restrict ciliation and may work together to regulate this process. Interacts with myosin light chain MYL9; the interaction results in inhibition of phosphorylation of MYL9 by DAPK3. Interacts with DAPK3; the interaction is likely to occur throughout the cell cycle and reduces the LUZP1-mediated suppression of MYL9 phosphorylation. Interacts with the chromosomal passenger complex (CPC); CPC kinase activity is required for localization of LUZP1 to the centromere. Expressed in cerebral cortex, cerebellum, hippocampus and brain stem.

It localises to the cytoplasm. The protein resides in the cytoskeleton. It is found in the microtubule organizing center. Its subcellular location is the centrosome. The protein localises to the cilium basal body. It localises to the midbody. The protein resides in the chromosome. It is found in the centromere. Its subcellular location is the spindle. The protein localises to the stress fiber. It localises to the nucleus. The protein resides in the cell projection. It is found in the dendrite. Its subcellular location is the perikaryon. The protein localises to the cell junction. It localises to the tight junction. F-actin cross-linking protein. Stabilizes actin and acts as a negative regulator of primary cilium formation. Positively regulates the phosphorylation of both myosin II and protein phosphatase 1 regulatory subunit PPP1R12A/MYPT1 and promotes the assembly of myosin II stacks within actin stress fibers. Inhibits the phosphorylation of myosin light chain MYL9 by DAPK3 and suppresses the constriction velocity of the contractile ring during cytokinesis. Binds to microtubules and promotes epithelial cell apical constriction by up-regulating levels of diphosphorylated myosin light chain (MLC) through microtubule-dependent inhibition of MLC dephosphorylation by myosin phosphatase. Involved in regulation of cell migration, nuclear size and centriole number, probably through regulation of the actin cytoskeleton. Component of the CERF-1 and CERF-5 chromatin remodeling complexes in embryonic stem cells where it acts to stabilize the complexes. Plays a role in embryonic brain and cardiovascular development. The chain is Leucine zipper protein 1 (Luzp1) from Rattus norvegicus (Rat).